Here is a 46-residue protein sequence, read N- to C-terminus: Lantibiotic streptin (46 aa).

The propeptide occupies 1 to 24 (MNNTIKDFDLDLKTNKKDTATPYV).

Belongs to the type A lantibiotic family. In terms of processing, maturation of lantibiotics involves the enzymatic conversion of Thr, and Ser into dehydrated AA and the formation of thioether bonds with cysteine. This is followed by membrane translocation and cleavage of the modified precursor.

Its function is as follows. Lanthionine-containing peptide antibiotic (lantibiotic) active on certain Gram-positive bacteria. The bactericidal activity of lantibiotics is based on depolarization of energized bacterial cytoplasmic membranes, initiated by the formation of aqueous transmembrane pores. This Streptococcus pyogenes serotype M1 protein is Lantibiotic streptin (srtA).